The chain runs to 82 residues: Sec-independent protein translocase protein TatA (82 aa).

The chain crosses the membrane as a helical span at residues 1-21; sequence MGGISIWQLLIIAVIIVLLFG. The segment at 46-82 is disordered; it reads DEPAKDAKKDADFVPQNLEKKEAETVEKQKQNDKEQA.

The protein belongs to the TatA/E family. In terms of assembly, the Tat system comprises two distinct complexes: a TatABC complex, containing multiple copies of TatA, TatB and TatC subunits, and a separate TatA complex, containing only TatA subunits. Substrates initially bind to the TatABC complex, which probably triggers association of the separate TatA complex to form the active translocon.

Its subcellular location is the cell inner membrane. Functionally, part of the twin-arginine translocation (Tat) system that transports large folded proteins containing a characteristic twin-arginine motif in their signal peptide across membranes. TatA could form the protein-conducting channel of the Tat system. The polypeptide is Sec-independent protein translocase protein TatA (Aliivibrio fischeri (strain MJ11) (Vibrio fischeri)).